The following is a 216-amino-acid chain: L-fuculose phosphate aldolase (216 aa).

Substrate is bound by residues G28–N29, T43–G44, and S71–S72. The active-site Proton donor/acceptor is E73. Zn(2+) is bound by residues E73, H92, H94, and H155.

The protein belongs to the aldolase class II family. AraD/FucA subfamily. In terms of assembly, homotetramer. Requires Zn(2+) as cofactor.

It carries out the reaction L-fuculose 1-phosphate = (S)-lactaldehyde + dihydroxyacetone phosphate. Its pathway is carbohydrate degradation; L-fucose degradation; L-lactaldehyde and glycerone phosphate from L-fucose: step 3/3. Its function is as follows. Involved in the degradation of L-fucose and D-arabinose. Catalyzes the reversible cleavage of L-fuculose 1-phosphate (Fuc1P) to yield dihydroxyacetone phosphate (DHAP) and L-lactaldehyde. The protein is L-fuculose phosphate aldolase of Haemophilus influenzae (strain ATCC 51907 / DSM 11121 / KW20 / Rd).